Consider the following 406-residue polypeptide: Cholinephosphotransferase 1 (406 aa).

Ala2 is subject to N-acetylalanine. Residues 2–62 (AAGAGAGSAP…LLQWIPLWMA (61 aa)) are Cytoplasmic-facing. The chain crosses the membrane as a helical span at residues 63 to 83 (PNSITLLGLAVNVVTTLVLIS). Residue Asn64 participates in CDP-choline binding. The Lumenal portion of the chain corresponds to 84–93 (YCPTATEEAP). The chain crosses the membrane as a helical span at residues 94–118 (YWTYLLCALGLFIYQSLDAIDGKQA). Positions 111 and 114 each coordinate Mg(2+). Residue Arg119 coordinates CDP-choline. Topologically, residues 119–125 (RRTNSCS) are cytoplasmic. A helical membrane pass occupies residues 126–150 (PLGELFDHGCDSLSTVFMAVGASIA). Asp132 is a Mg(2+) binding site. His133 (proton acceptor) is an active-site residue. Residue Asp136 coordinates Mg(2+). Residues 151–160 (ARLGTYPDWF) lie on the Lumenal side of the membrane. The helical transmembrane segment at 161–179 (FFCSFIGMFVFYCAHWQTY) threads the bilayer. The Cytoplasmic portion of the chain corresponds to 180 to 190 (VSGMLRFGKVD). Residues 191 to 207 (VTEIQIALVIVFVLSAF) form a helical membrane-spanning segment. Residues 208–222 (GGATMWDYTIPILEI) are Lumenal-facing. Residues 223–248 (KLKILPVLGFLGGVIFSCSNYFHVIL) traverse the membrane as a helical segment. Residues 249–265 (HGGVGKNGSTIAGTSVL) lie on the Cytoplasmic side of the membrane. A helical membrane pass occupies residues 266-281 (SPGLHIGLIIILAIMI). The Lumenal segment spans residues 282-293 (YKKSATDVFEKH). A helical transmembrane segment spans residues 294–316 (PCLYILMFGCVFAKVSQKLVVAH). Over 317–329 (MTKSELYLQDTVF) the chain is Cytoplasmic. A helical transmembrane segment spans residues 330 to 339 (LGPGLLFLDQ). Topologically, residues 340–346 (YFNNFID) are lumenal. A helical transmembrane segment spans residues 347 to 376 (EYVVLWMAMVISSFDMVIYFSALCLQISRH). Topologically, residues 377 to 406 (LHLNIFKTACHQAPEQVQVLSSKSHQNNMD) are cytoplasmic.

This sequence belongs to the CDP-alcohol phosphatidyltransferase class-I family. Requires Mg(2+) as cofactor. The cofactor is Mn(2+). As to expression, highly expressed in testis, colon, small intestine, heart, prostate and spleen. Also detected in kidney, skeletal muscle, pancreas, leukocytes, ovary and thymus. Weakly expressed in the brain, placenta and lung. Overexpressed in cancerous breast epithelial cell lines.

It is found in the golgi apparatus membrane. It carries out the reaction CDP-choline + a 1,2-diacyl-sn-glycerol = a 1,2-diacyl-sn-glycero-3-phosphocholine + CMP + H(+). It catalyses the reaction 1-octadecanoyl-2-(5Z,8Z,11Z,14Z-eicosatetraenoyl)-sn-glycerol + CDP-choline = 1-octadecanoyl-2-(5Z,8Z,11Z,14Z-eicosatetraenoyl)-sn-glycero-3-phosphocholine + CMP + H(+). The enzyme catalyses 1-hexadecanoyl-2-(9Z-octadecenoyl)-sn-glycerol + CDP-choline = 1-hexadecanoyl-2-(9Z-octadecenoyl)-sn-glycero-3-phosphocholine + CMP + H(+). The catalysed reaction is 1-hexadecanoyl-2-(4Z,7Z,10Z,13Z,16Z,19Z-docosahexaenoyl)-sn-glycerol + CDP-choline = 1-hexadecanoyl-2-(4Z,7Z,10Z,13Z,16Z,19Z-docosahexaenoyl)-sn-glycero-3-phosphocholine + CMP + H(+). It carries out the reaction 1,2-dioctanoyl-sn-glycerol + CDP-choline = 1,2-dioctanoyl-sn-glycero-3-phosphocholine + CMP + H(+). It participates in phospholipid metabolism; phosphatidylcholine biosynthesis; phosphatidylcholine from phosphocholine: step 2/2. Functionally, catalyzes the final step of de novo phosphatidylcholine (PC) synthesis, i.e. the transfer of choline phosphate from CDP-choline to the free hydroxyl of a diacylglycerol (DAG), producing a PC. It thereby plays a central role in the formation and maintenance of vesicular membranes. The chain is Cholinephosphotransferase 1 from Homo sapiens (Human).